The following is a 290-amino-acid chain: S-adenosylmethionine-dependent nucleotide dehydratase (290 aa).

The 221-residue stretch at Ser6–Leu226 folds into the Radical SAM core domain. [4Fe-4S] cluster is bound by residues Cys22, Cys26, and Cys29.

This sequence belongs to the radical SAM superfamily. Viperin family. [4Fe-4S] cluster is required as a cofactor.

It catalyses the reaction UTP + AH2 + S-adenosyl-L-methionine = 3'-deoxy-3',4'-didehydro-UTP + 5'-deoxyadenosine + L-methionine + A + H2O + H(+). Functionally, expression of pVip47 in E.coli (strain MG1655) confers resistance to phage P1; has no effect against T7. Catalyzes the conversion of uridine triphosphate (UTP) to 3'-deoxy-3',4'-didehydro-UTP (ddhUTP), probably via a SAM-dependent radical mechanism. The modified nucleotide represses transcription from T7 RNA polymerase-directed genes (possibly by acting as chain terminators), strongly suggesting these nucleotides block viral polymerase transcription. How this protein allows bacteria to resist viruses that do not encode their own RNA polymerase (such as lambda, P1) is unknown. This chain is S-adenosylmethionine-dependent nucleotide dehydratase, found in Flammeovirga pacifica.